A 117-amino-acid chain; its full sequence is Acidic phospholipase A2 (117 aa).

Disulfide bonds link C11–C70, C25–C116, C27–C43, C42–C98, C49–C91, C59–C84, and C77–C89. Residues Y26, G28, and G30 each coordinate Ca(2+). H46 is an active-site residue. Residue D47 participates in Ca(2+) binding. N-linked (GlcNAc...) asparagine glycosylation is present at N80. Residue D92 is part of the active site.

Requires Ca(2+) as cofactor. As to expression, expressed by the venom gland.

It localises to the secreted. It catalyses the reaction a 1,2-diacyl-sn-glycero-3-phosphocholine + H2O = a 1-acyl-sn-glycero-3-phosphocholine + a fatty acid + H(+). Its function is as follows. Snake venom phospholipase A2 (PLA2) that shows strong myotoxicity and induces edema in mice. Shows no cytotoxicity in vitro. Has a strong anticoagulant effect in vitro. PLA2 catalyzes the calcium-dependent hydrolysis of the 2-acyl groups in 3-sn-phosphoglycerides. The polypeptide is Acidic phospholipase A2 (Micrurus dumerilii (Coral snake)).